The primary structure comprises 635 residues: Threonine--tRNA ligase (635 aa).

The 61-residue stretch at 1-61 (MVSIRLPDGS…DRDASLAIVT (61 aa)) folds into the TGS domain. Residues 242 to 533 (DHRKLGKQLD…LIEHHAGAMP (292 aa)) form a catalytic region. C333, H384, and H510 together coordinate Zn(2+).

It belongs to the class-II aminoacyl-tRNA synthetase family. Homodimer. It depends on Zn(2+) as a cofactor.

Its subcellular location is the cytoplasm. It catalyses the reaction tRNA(Thr) + L-threonine + ATP = L-threonyl-tRNA(Thr) + AMP + diphosphate + H(+). Functionally, catalyzes the attachment of threonine to tRNA(Thr) in a two-step reaction: L-threonine is first activated by ATP to form Thr-AMP and then transferred to the acceptor end of tRNA(Thr). Also edits incorrectly charged L-seryl-tRNA(Thr). The chain is Threonine--tRNA ligase from Burkholderia pseudomallei (strain 1106a).